A 921-amino-acid polypeptide reads, in one-letter code: Extended synaptotagmin-2 (921 aa).

The Cytoplasmic segment spans residues 1-103; sequence MTANRDAALS…RPGGPENPGG (103 aa). Positions 1–103 are disordered; sequence MTANRDAALS…RPGGPENPGG (103 aa). A compositionally biased stretch (basic residues) spans 58–75; it reads GARRRAKTARGLRGHRQR. The helical transmembrane segment at 104-124 threads the bilayer; sequence VLSVELPGLLAQLARSFALLL. The Lumenal segment spans residues 125–127; that stretch reads PVY. A helical transmembrane segment spans residues 128–148; the sequence is ALGYLGLSFSWVLLALALLAW. The Cytoplasmic segment spans residues 149–921; sequence CRRSRGLKAL…EDGTRPQAMT (773 aa). In terms of domain architecture, SMP-LTD spans 191-370; it reads DTERAEWLNK…LPNRITVPLV (180 aa). C2 domains are found at residues 369-489 and 514-639; these read LVSE…DEWF and NLDK…QLSN. Positions 400, 401, 413, 460, 461, 462, 464, 466, and 467 each coordinate Ca(2+). A disordered region spans residues 660–754; that stretch reads RERPPDHQHS…GHISVKEPTP (95 aa). 2 positions are modified to phosphoserine: Ser-691 and Ser-693. Position 705 is a phosphothreonine (Thr-705). 8 positions are modified to phosphoserine: Ser-736, Ser-738, Ser-739, Ser-743, Ser-748, Ser-755, Ser-758, and Ser-761. The C2 3 domain occupies 786 to 908; that stretch reads PLGQIQLTIR…ELAKGWTQWY (123 aa). The segment at 833 to 840 is required for phosphatidylinositol 4,5-bisphosphate-dependent location at the cell membrane; that stretch reads KRRSGRRK.

Belongs to the extended synaptotagmin family. As to quaternary structure, homodimer. Interacts with ESYT1 and ESYT3. Interacts with FGFR1 that has been activated by FGF1 binding. Interacts with the AP-2 complex; identified in a complex with the AP-2 complex and FGFR1. In terms of tissue distribution, widely expressed with high level in cerebellum.

It localises to the cell membrane. The protein resides in the endoplasmic reticulum membrane. Tethers the endoplasmic reticulum to the cell membrane and promotes the formation of appositions between the endoplasmic reticulum and the cell membrane. Binds glycerophospholipids in a barrel-like domain and may play a role in cellular lipid transport. Plays a role in FGF signaling via its role in the rapid internalization of FGFR1 that has been activated by FGF1 binding; this occurs most likely via the AP-2 complex. Promotes the localization of SACM1L at endoplasmic reticulum-plasma membrane contact sites (EPCS). This chain is Extended synaptotagmin-2, found in Homo sapiens (Human).